The following is a 207-amino-acid chain: 2,3-bisphosphoglycerate-dependent phosphoglycerate mutase (207 aa).

Residues 10–17, 23–24, R62, 89–92, K100, 116–117, and 160–161 each bind substrate; these read RHGQSEWN, TG, ERDY, RR, and GN. Catalysis depends on H11, which acts as the Tele-phosphohistidine intermediate. E89 functions as the Proton donor/acceptor in the catalytic mechanism.

This sequence belongs to the phosphoglycerate mutase family. BPG-dependent PGAM subfamily. Homodimer.

The enzyme catalyses (2R)-2-phosphoglycerate = (2R)-3-phosphoglycerate. It functions in the pathway carbohydrate degradation; glycolysis; pyruvate from D-glyceraldehyde 3-phosphate: step 3/5. Catalyzes the interconversion of 2-phosphoglycerate and 3-phosphoglycerate. This is 2,3-bisphosphoglycerate-dependent phosphoglycerate mutase from Nitrobacter hamburgensis (strain DSM 10229 / NCIMB 13809 / X14).